The sequence spans 164 residues: Cyclic pyranopterin monophosphate synthase (164 aa).

Residues 75 to 77 and 116 to 117 contribute to the substrate site; these read MCH and ME. Asp131 is an active-site residue.

This sequence belongs to the MoaC family. Homohexamer; trimer of dimers.

The enzyme catalyses (8S)-3',8-cyclo-7,8-dihydroguanosine 5'-triphosphate = cyclic pyranopterin phosphate + diphosphate. Its pathway is cofactor biosynthesis; molybdopterin biosynthesis. Functionally, catalyzes the conversion of (8S)-3',8-cyclo-7,8-dihydroguanosine 5'-triphosphate to cyclic pyranopterin monophosphate (cPMP). In Staphylococcus aureus (strain Mu3 / ATCC 700698), this protein is Cyclic pyranopterin monophosphate synthase.